A 1158-amino-acid polypeptide reads, in one-letter code: MVSSLARYAFNIYGDTRPRERPRRLEYPCERELTCLSQLQRPGQPPVVILGGKNCLRMLALNADNTAVVADSSIVDSARTPQKLFSVNTLKCTSDLVACGLANGTVQVYQVTSGGKNRLAYKLQDHKRVVNSLDFVDDSVLVSGSQDGTVKVWDLRTFSPRPVMQLAASHHSDPVRSCQASAHCRVRGKTTVLSVHDSGALCKFDLRATAGVGAGVGAGAGAGALLPERKWTFHSGPALSLHIHPDAEYVLTGGRDRKICVWHYGEAGSHSVAPLSIVNTYGPVMKVRWCTVAAQDPVEPTLDLPDAPDPSCLYNYDFACSYLNDDATISVYNLRRRYIPKAVVASPMRKPVQNFVWVASRTDRRLFSISKANVLVAHDLDVNDVDITRPLDNMPAVATAWRPGYANVSIVSQHKNDFELGDPVADSRDTSFDDTRDDLSHSRSTPPKERPPIVRQSTQFTVASLKSQSPVLHQRGMDSSVRDSSARAMDLSGRGLDLPPPVRPSLPRNPSQSTQGSQSSGAAHSKSLPHAPSPYVAALSVPIPLADDTVFDILAAEYHISVPDGFSLLDVCQMNARVAASVSRYRDCEIWRMLGVSLEQEFEEHQFDDPRFDGQFEDQHTDPQNASGSQHSEKDIDTKSVSSYLGNFVGSFNSNSTSTTNYGGPHRSDSATSMNKALFGSKEREGKEGKDIKHGKREKEIEQGLESPKELNPLSTRRKDSDSKANNADSSALDKPGDKSLDRSALDRSAPTSFRNKSLLQTSDGETPKDNNLSDEIHAYEPRNNLSTKVSLSTMSSQKSKAIDIKAPRRYSNNAMSASMSPEIFASSESPLKHIAKLSPSRSQTGHSWSIPSSSHDLDDENMPASVSGSLASSGYMGGPDSRSGITGTSFHSNPRSHPSFSSHRSSLTSGRSSFVTNRSGFYSSQVQPAPQLLEKVEEFSISSAEPKTSELTKAMRKKKFSYEELESSEANEKPWSLINLLEKAVIYARDQGDLVMCCTLILLFHDLFKKIFSNRILSDNACLECLALYVDTLRGKCLFTTAVNVVKEAPSSLNYKLAVYASKDVDMRYYCCWCEKLLVNETSKAKFGPNSENFGYWYCDSCSRRQSNCIYCGEPCRGLTVVVSLNCGHRGHFGCLQEWFLDEQSTGCPGGCEYVMD.

WD repeat units lie at residues 80–119 (TPQK…KNRL), 125–163 (DHKR…PRPV), 170–214 (HHSD…GVGA), 233–272 (FHSG…SHSV), and 293–342 (AAQD…IPKA). Disordered stretches follow at residues 421-529 (GDPV…KSLP), 610-637 (PRFD…KDID), 678-808 (LFGS…IKAP), and 837-909 (KLSP…SSLT). Residues 425 to 452 (ADSRDTSFDDTRDDLSHSRSTPPKERPP) show a composition bias toward basic and acidic residues. Over residues 455–471 (RQSTQFTVASLKSQSPV) the composition is skewed to polar residues. Positions 505–526 (SLPRNPSQSTQGSQSSGAAHSK) are enriched in low complexity. 3 stretches are compositionally biased toward basic and acidic residues: residues 610–621 (PRFDGQFEDQHT), 681–702 (SKER…KEIE), and 735–746 (KPGDKSLDRSAL). Polar residues-rich tracts occupy residues 750–765 (APTS…TSDG), 784–800 (NNLS…SQKS), and 840–855 (PSRS…PSSS). A compositionally biased stretch (low complexity) spans 890–909 (SFHSNPRSHPSFSSHRSSLT). The RING-type; degenerate zinc-finger motif lies at 1110–1153 (CIYCGEPCRGLTVVVSLNCGHRGHFGCLQEWFLDEQSTGCPGGC).

It belongs to the WD repeat RTC1 family.

The protein resides in the vacuole. Functionally, may be involved in a process influencing telomere capping. The chain is Restriction of telomere capping protein 1 (RTC1) from Clavispora lusitaniae (strain ATCC 42720) (Yeast).